The following is a 191-amino-acid chain: Inosine triphosphate pyrophosphatase (191 aa).

12–17 (TGNKNK) is an ITP binding site. Glutamate 40 contributes to the Mg(2+) binding site. Residues lysine 52, 68-69 (DS), lysine 85, 144-147 (FGWE), lysine 167, and 172-173 (HR) each bind ITP.

It belongs to the HAM1 NTPase family. As to quaternary structure, homodimer. Mg(2+) is required as a cofactor. Requires Mn(2+) as cofactor.

Its subcellular location is the cytoplasm. It localises to the nucleus. The catalysed reaction is ITP + H2O = IMP + diphosphate + H(+). It catalyses the reaction dITP + H2O = dIMP + diphosphate + H(+). The enzyme catalyses XTP + H2O = XMP + diphosphate + H(+). Functionally, pyrophosphatase that hydrolyzes non-canonical purine nucleotides such as inosine triphosphate (ITP), deoxyinosine triphosphate (dITP) or xanthosine 5'-triphosphate (XTP) to their respective monophosphate derivatives. The enzyme does not distinguish between the deoxy- and ribose forms. Probably excludes non-canonical purines from RNA and DNA precursor pools, thus preventing their incorporation into RNA and DNA and avoiding chromosomal lesions. The sequence is that of Inosine triphosphate pyrophosphatase from Aspergillus oryzae (strain ATCC 42149 / RIB 40) (Yellow koji mold).